The primary structure comprises 73 residues: UPF0235 protein LA_1736 (73 aa).

The protein belongs to the UPF0235 family.

The polypeptide is UPF0235 protein LA_1736 (Leptospira interrogans serogroup Icterohaemorrhagiae serovar Lai (strain 56601)).